We begin with the raw amino-acid sequence, 250 residues long: Urease accessory protein UreG 3 (250 aa).

Residues 1–24 are disordered; sequence MPDNASAQQPGQPAQGPNEHYHQP. Over residues 7–17 the composition is skewed to low complexity; sequence AQQPGQPAQGP. Residue 37 to 44 participates in GTP binding; the sequence is GPVGTGKS. The disordered stretch occupies residues 230 to 250; sequence GTHVPTDPGPMAPHSHSHDGS.

Belongs to the SIMIBI class G3E GTPase family. UreG subfamily. Homodimer. UreD, UreF and UreG form a complex that acts as a GTP-hydrolysis-dependent molecular chaperone, activating the urease apoprotein by helping to assemble the nickel containing metallocenter of UreC. The UreE protein probably delivers the nickel.

The protein localises to the cytoplasm. Its function is as follows. Facilitates the functional incorporation of the urease nickel metallocenter. This process requires GTP hydrolysis, probably effectuated by UreG. The chain is Urease accessory protein UreG 3 from Streptomyces griseus subsp. griseus (strain JCM 4626 / CBS 651.72 / NBRC 13350 / KCC S-0626 / ISP 5235).